A 253-amino-acid chain; its full sequence is Probable transcriptional regulatory protein Mlut_12910 (253 aa).

Belongs to the TACO1 family.

The protein localises to the cytoplasm. The protein is Probable transcriptional regulatory protein Mlut_12910 of Micrococcus luteus (strain ATCC 4698 / DSM 20030 / JCM 1464 / CCM 169 / CCUG 5858 / IAM 1056 / NBRC 3333 / NCIMB 9278 / NCTC 2665 / VKM Ac-2230) (Micrococcus lysodeikticus).